The chain runs to 347 residues: Holliday junction branch migration complex subunit RuvB (347 aa).

Residues 1-182 (MSAQNPVLTP…FGIPVRLSFY (182 aa)) form a large ATPase domain (RuvB-L) region. ATP is bound by residues Leu21, Arg22, Gly63, Lys66, Thr67, Thr68, 129–131 (EDF), Arg172, Tyr182, and Arg219. Thr67 is a Mg(2+) binding site. The segment at 183–253 (TVEELELIVR…IADEALTRLL (71 aa)) is small ATPAse domain (RuvB-S). Positions 256 to 347 (NMGLDQLDTR…QFRLTLEDDD (92 aa)) are head domain (RuvB-H). The DNA site is built by Arg292, Arg311, and Arg316.

This sequence belongs to the RuvB family. As to quaternary structure, homohexamer. Forms an RuvA(8)-RuvB(12)-Holliday junction (HJ) complex. HJ DNA is sandwiched between 2 RuvA tetramers; dsDNA enters through RuvA and exits via RuvB. An RuvB hexamer assembles on each DNA strand where it exits the tetramer. Each RuvB hexamer is contacted by two RuvA subunits (via domain III) on 2 adjacent RuvB subunits; this complex drives branch migration. In the full resolvosome a probable DNA-RuvA(4)-RuvB(12)-RuvC(2) complex forms which resolves the HJ.

Its subcellular location is the cytoplasm. The catalysed reaction is ATP + H2O = ADP + phosphate + H(+). Functionally, the RuvA-RuvB-RuvC complex processes Holliday junction (HJ) DNA during genetic recombination and DNA repair, while the RuvA-RuvB complex plays an important role in the rescue of blocked DNA replication forks via replication fork reversal (RFR). RuvA specifically binds to HJ cruciform DNA, conferring on it an open structure. The RuvB hexamer acts as an ATP-dependent pump, pulling dsDNA into and through the RuvAB complex. RuvB forms 2 homohexamers on either side of HJ DNA bound by 1 or 2 RuvA tetramers; 4 subunits per hexamer contact DNA at a time. Coordinated motions by a converter formed by DNA-disengaged RuvB subunits stimulates ATP hydrolysis and nucleotide exchange. Immobilization of the converter enables RuvB to convert the ATP-contained energy into a lever motion, pulling 2 nucleotides of DNA out of the RuvA tetramer per ATP hydrolyzed, thus driving DNA branch migration. The RuvB motors rotate together with the DNA substrate, which together with the progressing nucleotide cycle form the mechanistic basis for DNA recombination by continuous HJ branch migration. Branch migration allows RuvC to scan DNA until it finds its consensus sequence, where it cleaves and resolves cruciform DNA. The protein is Holliday junction branch migration complex subunit RuvB of Allorhizobium ampelinum (strain ATCC BAA-846 / DSM 112012 / S4) (Agrobacterium vitis (strain S4)).